The following is a 358-amino-acid chain: Peptide chain release factor 1 (358 aa).

Position 233 is an N5-methylglutamine (Gln-233).

It belongs to the prokaryotic/mitochondrial release factor family. Post-translationally, methylated by PrmC. Methylation increases the termination efficiency of RF1.

It localises to the cytoplasm. Its function is as follows. Peptide chain release factor 1 directs the termination of translation in response to the peptide chain termination codons UAG and UAA. The sequence is that of Peptide chain release factor 1 from Geobacillus sp. (strain WCH70).